The sequence spans 29 residues: Cytochrome b6-f complex subunit 8 (29 aa).

A helical membrane pass occupies residues 3–23 (ILSLGWAALMTMFTFSLALTV).

This sequence belongs to the PetN family. As to quaternary structure, the 4 large subunits of the cytochrome b6-f complex are cytochrome b6, subunit IV (17 kDa polypeptide, PetD), cytochrome f and the Rieske protein, while the 4 small subunits are PetG, PetL, PetM and PetN. The complex functions as a dimer.

It localises to the plastid. It is found in the chloroplast thylakoid membrane. Component of the cytochrome b6-f complex, which mediates electron transfer between photosystem II (PSII) and photosystem I (PSI), cyclic electron flow around PSI, and state transitions. The chain is Cytochrome b6-f complex subunit 8 from Phaeodactylum tricornutum (strain CCAP 1055/1).